We begin with the raw amino-acid sequence, 121 residues long: Small ribosomal subunit protein uS13 (121 aa).

A disordered region spans residues 91 to 121 (HRRGLPVRGQNTKNNARTRKGKKASMAGKKK). Over residues 106–121 (ARTRKGKKASMAGKKK) the composition is skewed to basic residues.

This sequence belongs to the universal ribosomal protein uS13 family. As to quaternary structure, part of the 30S ribosomal subunit. Forms a loose heterodimer with protein S19. Forms two bridges to the 50S subunit in the 70S ribosome.

Located at the top of the head of the 30S subunit, it contacts several helices of the 16S rRNA. In the 70S ribosome it contacts the 23S rRNA (bridge B1a) and protein L5 of the 50S subunit (bridge B1b), connecting the 2 subunits; these bridges are implicated in subunit movement. Contacts the tRNAs in the A and P-sites. The polypeptide is Small ribosomal subunit protein uS13 (Lacticaseibacillus paracasei (strain ATCC 334 / BCRC 17002 / CCUG 31169 / CIP 107868 / KCTC 3260 / NRRL B-441) (Lactobacillus paracasei)).